Here is a 257-residue protein sequence, read N- to C-terminus: MPHLVLDKISIHYDGQPAPAVERVSIDVAGDDFVVLVGRSGCGKTSLLNVAAGLVTPARGSATINGRPITAPGSDRAVVFQNDALFPWLTARENVAFALRLRGVRPAERARRADELLALVKLGDAGDKRIWELSGGMRQRVGLARALAAEPQFLLLDEPLGALDALTRERMQTTLLDLWTASHAGVLMVTHGIEEALVLATRIVVLAPGPGRVVRTFEPGFSRRYAAGEPIRAIKADPAFATARGELTDAIFEGETA.

The ABC transporter domain maps to leucine 6 to alanine 233. Position 38–45 (glycine 38–threonine 45) interacts with ATP.

Belongs to the ABC transporter superfamily. Taurine importer (TC 3.A.1.17.1) family. The complex is composed of two ATP-binding proteins (TauB), two transmembrane proteins (TauC) and a solute-binding protein (TauA).

It localises to the cell inner membrane. It catalyses the reaction taurine(out) + ATP + H2O = taurine(in) + ADP + phosphate + H(+). Part of the ABC transporter complex TauABC involved in taurine import. Responsible for energy coupling to the transport system. In Mesorhizobium japonicum (strain LMG 29417 / CECT 9101 / MAFF 303099) (Mesorhizobium loti (strain MAFF 303099)), this protein is Taurine import ATP-binding protein TauB.